Reading from the N-terminus, the 89-residue chain is Large ribosomal subunit protein bL27 (89 aa).

The disordered stretch occupies residues 1 to 20 (MAHKKAGGSSRNGRDSAGQR).

The protein belongs to the bacterial ribosomal protein bL27 family.

This chain is Large ribosomal subunit protein bL27, found in Paramagnetospirillum magneticum (strain ATCC 700264 / AMB-1) (Magnetospirillum magneticum).